The chain runs to 348 residues: D-alanine--D-alanine ligase (348 aa).

In terms of domain architecture, ATP-grasp spans 132–334; it reads KRVLESIGIP…YPDLIEELVT (203 aa). 162-217 contributes to the ATP binding site; it reads LARLTFPIFVKPANMGSSVGISKAQTKVELRKAIQLALTYDSRVLIEQGVVAREIE. Positions 288, 301, and 303 each coordinate Mg(2+).

Belongs to the D-alanine--D-alanine ligase family. Mg(2+) serves as cofactor. Mn(2+) is required as a cofactor.

It localises to the cytoplasm. It carries out the reaction 2 D-alanine + ATP = D-alanyl-D-alanine + ADP + phosphate + H(+). It participates in cell wall biogenesis; peptidoglycan biosynthesis. In terms of biological role, cell wall formation. This Streptococcus pyogenes serotype M18 (strain MGAS8232) protein is D-alanine--D-alanine ligase.